The chain runs to 507 residues: Glutamyl-tRNA(Gln) amidotransferase subunit A, mitochondrial (507 aa).

Catalysis depends on charge relay system residues lysine 79 and serine 160. Serine 184 acts as the Acyl-ester intermediate in catalysis.

The protein belongs to the amidase family. GatA subfamily. As to quaternary structure, subunit of the heterotrimeric GatCAB amidotransferase (AdT) complex, composed of A, B and C subunits.

It is found in the mitochondrion. It catalyses the reaction L-glutamyl-tRNA(Gln) + L-glutamine + ATP + H2O = L-glutaminyl-tRNA(Gln) + L-glutamate + ADP + phosphate + H(+). In terms of biological role, allows the formation of correctly charged Gln-tRNA(Gln) through the transamidation of misacylated Glu-tRNA(Gln) in the mitochondria. The reaction takes place in the presence of glutamine and ATP through an activated gamma-phospho-Glu-tRNA(Gln). The protein is Glutamyl-tRNA(Gln) amidotransferase subunit A, mitochondrial of Drosophila pseudoobscura pseudoobscura (Fruit fly).